Here is a 64-residue protein sequence, read N- to C-terminus: Thrombin-like enzyme collinein-4 (64 aa).

2 cysteine pairs are disulfide-bonded: Cys-5-Cys-23 and Cys-34-Cys-51.

In terms of assembly, monomer. Expressed by the vanom gland.

Its subcellular location is the secreted. Its function is as follows. Thrombin-like snake venom serine protease. The sequence is that of Thrombin-like enzyme collinein-4 from Crotalus durissus collilineatus (Brazilian rattlesnake).